Reading from the N-terminus, the 37-residue chain is Esculentin-2HSa (37 aa).

The cysteines at positions 31 and 37 are disulfide-linked.

Expressed by the skin glands.

The protein localises to the secreted. Its function is as follows. Has antibacterial activity against the Gram-positive bacterium S.aureus ATCC 25923 (MIC=32 uM) and the Gram-negative bacterium E.coli ATCC 25726 (MIC=16 uM). This Odorrana hosii (Hose's rock frog) protein is Esculentin-2HSa.